The following is a 408-amino-acid chain: Succinylornithine transaminase (408 aa).

Lysine 252 is subject to N6-(pyridoxal phosphate)lysine.

It belongs to the class-III pyridoxal-phosphate-dependent aminotransferase family. AstC subfamily. Pyridoxal 5'-phosphate serves as cofactor.

The enzyme catalyses N(2)-succinyl-L-ornithine + 2-oxoglutarate = N-succinyl-L-glutamate 5-semialdehyde + L-glutamate. Its pathway is amino-acid degradation; L-arginine degradation via AST pathway; L-glutamate and succinate from L-arginine: step 3/5. In terms of biological role, catalyzes the transamination of N(2)-succinylornithine and alpha-ketoglutarate into N(2)-succinylglutamate semialdehyde and glutamate. Can also act as an acetylornithine aminotransferase. This chain is Succinylornithine transaminase, found in Salmonella heidelberg (strain SL476).